A 310-amino-acid chain; its full sequence is Membrane protein insertase YidC 2 (310 aa).

The N-terminal stretch at 1 to 23 (MKKTLKRILFSSLSLSMLLLLTG) is a signal peptide. Cysteine 24 carries the N-palmitoyl cysteine lipid modification. Cysteine 24 is lipidated: S-diacylglycerol cysteine. A run of 5 helical transmembrane segments spans residues 33–53 (PYGV…TYFA), 58–78 (LGFG…ILPL), 135–155 (FGGI…AIFF), 180–200 (LTVI…QGVP), and 219–239 (VFMS…GGIF). Positions 266–310 (NPPKAYKANNARKDVTNSTKATESNQAIITSKKTNRNAGKQKRRG) are disordered. The segment covering 281-297 (TNSTKATESNQAIITSK) has biased composition (polar residues). Residues 298–310 (KTNRNAGKQKRRG) are compositionally biased toward basic residues.

It belongs to the OXA1/ALB3/YidC family. Type 2 subfamily.

The protein localises to the cell membrane. Required for the insertion and/or proper folding and/or complex formation of integral membrane proteins into the membrane. Involved in integration of membrane proteins that insert both dependently and independently of the Sec translocase complex, as well as at least some lipoproteins. The protein is Membrane protein insertase YidC 2 of Streptococcus agalactiae serotype V (strain ATCC BAA-611 / 2603 V/R).